Reading from the N-terminus, the 732-residue chain is Zinc-exporting P-type ATPase (732 aa).

Residues 29-96 enclose the HMA domain; sequence GRMRVRADWV…AIGGAKHVAA (68 aa). The next 6 membrane-spanning stretches (helical) occupy residues 105-123, 146-164, 172-186, 195-209, 342-366, and 372-390; these read HSTE…GGAA, MVAT…RGAL, AGTD…IASL, LTVL…YLQD, VGEN…LVTG, and MTML…TPTA. Catalysis depends on D423, which acts as the 4-aspartylphosphate intermediate. 3 residues coordinate Mg(2+): D423, T425, and D625. Transmembrane regions (helical) follow at residues 676–695 and 705–724; these read AVDV…AAGL and PVLA…ANSS.

Belongs to the cation transport ATPase (P-type) (TC 3.A.3) family. Type IB subfamily.

Its subcellular location is the cell membrane. It carries out the reaction Zn(2+)(in) + ATP + H2O = Zn(2+)(out) + ADP + phosphate + H(+). Zn(2+) efflux transporter which is involved in detoxification of zinc during infection. This is Zinc-exporting P-type ATPase from Mycobacterium marinum (strain ATCC BAA-535 / M).